Consider the following 77-residue polypeptide: MGGISIWQLLIIALIVVLLFGTKKLRSLGGDLGGAIKGFKNAMSDEEKKALEDKEAAAQTTQQATEKKPEADKKEQA.

The helical transmembrane segment at Met1–Gly21 threads the bilayer. Basic and acidic residues-rich tracts occupy residues Glu47–Ala56 and Thr65–Ala77. The interval Glu47 to Ala77 is disordered.

The protein belongs to the TatA/E family. The Tat system comprises two distinct complexes: a TatABC complex, containing multiple copies of TatA, TatB and TatC subunits, and a separate TatA complex, containing only TatA subunits. Substrates initially bind to the TatABC complex, which probably triggers association of the separate TatA complex to form the active translocon.

The protein localises to the cell inner membrane. In terms of biological role, part of the twin-arginine translocation (Tat) system that transports large folded proteins containing a characteristic twin-arginine motif in their signal peptide across membranes. TatA could form the protein-conducting channel of the Tat system. In Shewanella amazonensis (strain ATCC BAA-1098 / SB2B), this protein is Sec-independent protein translocase protein TatA.